The sequence spans 95 residues: Probable dolichol-phosphate mannosyltransferase subunit 3 (95 aa).

Transmembrane regions (helical) follow at residues 10–30 (AHVI…VPVL) and 44–64 (APFF…VYGV).

This sequence belongs to the DPM3 family.

The protein localises to the endoplasmic reticulum membrane. The protein operates within protein modification; protein glycosylation. Its function is as follows. Stabilizer subunit of the dolichol-phosphate-mannose synthase complex. This chain is Probable dolichol-phosphate mannosyltransferase subunit 3 (dpm-3), found in Caenorhabditis elegans.